The sequence spans 668 residues: Ras guanine nucleotide exchange factor D (668 aa).

Residues 27–224 form the Rho-GAP domain; that stretch reads KKLESIFGIA…LMVMDIDEFD (198 aa). The region spanning 237–362 is the N-terminal Ras-GEF domain; it reads GESIVKAATF…YFQTFFKPVI (126 aa). A Ras-GEF domain is found at 433-663; sequence GSNIIAQQIT…HSISHKLEPR (231 aa).

In terms of biological role, promotes the exchange of Ras-bound GDP by GTP. This is Ras guanine nucleotide exchange factor D (gefD) from Dictyostelium discoideum (Social amoeba).